A 98-amino-acid chain; its full sequence is Small ribosomal subunit protein eS24 (98 aa).

Belongs to the eukaryotic ribosomal protein eS24 family.

This Thermococcus gammatolerans (strain DSM 15229 / JCM 11827 / EJ3) protein is Small ribosomal subunit protein eS24.